The following is a 200-amino-acid chain: Chromophore lyase CpcS/CpeS (200 aa).

The protein belongs to the CpcS/CpeS biliprotein lyase family.

Functionally, covalently attaches a chromophore to Cys residue(s) of phycobiliproteins. This Synechococcus sp. (strain WH8020) protein is Chromophore lyase CpcS/CpeS.